The sequence spans 261 residues: Hydroxylase cctR (261 aa).

The chain crosses the membrane as a helical span at residues 38 to 58 (VFVSLLILSNTISFGLLGWIG). An N-linked (GlcNAc...) asparagine glycan is attached at Asn95. 2 short sequence motifs (HXXHC) span residues 146–150 (HEIHC) and 176–180 (HIAHC).

This sequence belongs to the ustYa family.

Its subcellular location is the membrane. It participates in mycotoxin biosynthesis. Hydroxylase; part of the gene cluster that mediates the biosynthesis of the mycotoxin cyclochlorotine, a hepatotoxic and carcinogenic cyclic chlorinated pentapeptide. Within the pathway, cctR performs the last step by hydroxylating cyclochlorotine to yield hydroxycyclochlorotine. The NRPS cctN initially catalyzes the condensation of L-serine (Ser), Pro, L-2-aminobutyrate (2Abu), Ser, and beta-Phe in this order to produce isocyclotine. After the dichlorination of Pro2 catalyzed by cctP2 to produce isocyclochlorotine, the cctO-mediated transacylation of isocyclochlorotine can furnish cyclochlorotine. The subsequent hydroxylation of cyclochlorotine by cctR yields hydroxycyclochlorotine as the final product. CctP1 probably acts as a phenylalanine aminomutase and provides the uncommon building block beta-Phe. Furthermore, 2Abu can be synthesized from threonine by one of the threonine dehydratases and transaminases localized outside of the cluster. The functions of the remaining proteins encoded by the cluster, cctM and cctT, have not been identified yet. This is Hydroxylase cctR from Talaromyces islandicus (Penicillium islandicum).